A 768-amino-acid chain; its full sequence is MLKARNCGWIRLLPLFMLSLPVQAELRCVANAVDIESFFSAATAEDKQQVEQAINSSVNLVPFGLSASNWKVHRGDLVVEGNIESNQKLIVLGNLTVKGNISTFSLSNPWVILGNVTATNIVADSPLLITGSINASGLVFIDSYYDNPSTIKGSINARGIFINDIIAPVVASSTNSEFMVRASDKHDTENVKKALMIINPDAYYWGLINDEDALKEIFKRSNIRMAGNVCNQMKKEALFRPKPSPELVQELQMLDEGKVAAFEGRDIATFDLAVMRTLPRLKGISANLRKQLINSNDEQTIESMARYMPDNEILELTDQQLGYQPVVLGLLDREPLSVEIMTRMSRLPDGVGPLNLALRENLPLDIVMTLAKRDWDMIIQELYKDAWLLPESIIDGYIRSDDSSIRQVGAGGQLTYNQAMQLANDSSNNVVTSLAFKLAEMKHHGQLLRMTPQESDKVAGYLYQKFENDDDLIRVLFLALPDNLQFNFVKRMEKKSPAYFCCRDMQVIHSDAALQRLLTRFNDPEGWSNLAKNQYLSTSMKQKIWQRALSHRKNNPKADSDAYETSADMILSELISHGEVDDQMLLNATALIRSDDWDFLESALISWDNLPAVVLKELQQNTPRNDIWAKFFLRQENSSRAQVDEALRVYYALDPDALAQLDVLAKQPDRIWWSTLAKSNLTFFKFGALNNRHTPPAVLAAEIDPEWWIVAMNNPRFPVDVLKARLKRDPLLALELVNPELDLVRQLALNGKTRAIREQAMRKLDELY.

This sequence to E.coli YkiA.

This is an uncharacterized protein from Escherichia coli (strain K12).